We begin with the raw amino-acid sequence, 423 residues long: ER-bound oxygenase mpaB' (423 aa).

The Lumenal segment spans residues 1–22 (MSLSLPPALSELARALPYSRTQ). The helical transmembrane segment at 23–41 (WLPILVGFLIGYPLLIKAL) threads the bilayer. The Cytoplasmic segment spans residues 42–423 (RYKRLGEMKK…ISRTGKCPFH (382 aa)).

Belongs to the mpaB oxygenase family.

The protein resides in the endoplasmic reticulum membrane. The catalysed reaction is 4-farnesyl-3,5-dihydroxy-6-methylphthalide + AH2 + 2 O2 = (4E,8E)-10-(4,6-dihydroxy-7-methyl-3-oxo-1,3-dihydro-2-benzofuran-5-yl)-4,8-dimethyldeca-4,8-dienoate + acetone + A + H2O + H(+). Its pathway is secondary metabolite biosynthesis; terpenoid biosynthesis. Its function is as follows. ER-bound oxygenase; part of the gene cluster that mediates the biosynthesis of mycophenolic acid (MPA), the first isolated antibiotic natural product in the world obtained from a culture of Penicillium brevicompactum in 1893. MpaB' catalyzes the oxidative cleavage the C19-C20 double bond in farnesyl-DHMP (FDHMP) to yield FDHMP-3C via a mycophenolic aldehyde intermediate. The first step of the pathway is the synthesis of 5-methylorsellinic acid (5MOA) by the cytosolic polyketide synthase mpaC. 5MOA is then converted to the phthalide compound 5,7-dihydroxy-4,6-dimethylphthalide (DHMP) by the endoplasmic reticulum-bound cytochrome P450 monooxygenase mpaDE. MpaDE first catalyzes hydroxylation of 5-MOA to 4,6-dihydroxy-2-(hydroxymethyl)-3-methylbenzoic acid (DHMB). MpaDE then acts as a lactone synthase that catalyzes the ring closure to convert DHMB into DHMP. The next step is the prenylation of DHMP by the Golgi apparatus-associated prenyltransferase mpaA to yield farnesyl-DHMP (FDHMP). The ER-bound oxygenase mpaB then mediates the oxidative cleavage the C19-C20 double bond in FDHMP to yield FDHMP-3C via a mycophenolic aldehyde intermediate. The O-methyltransferase mpaG catalyzes the methylation of FDHMP-3C to yield MFDHMP-3C. After the cytosolic methylation of FDHMP-3C, MFDHMP-3C enters into peroxisomes probably via free diffusion due to its low molecular weight. Upon a peroxisomal CoA ligation reaction, catalyzed by a beta-oxidation component enzyme acyl-CoA ligase ACL891, MFDHMP-3C-CoA would then be restricted to peroxisomes for the following beta-oxidation pathway steps. The peroxisomal beta-oxidation machinery than converts MFDHMP-3C-CoA into MPA_CoA, via a beta-oxidation chain-shortening process. Finally mpaH acts as a peroxisomal acyl-CoA hydrolase with high substrate specificity toward MPA-CoA to release the final product MPA. The sequence is that of ER-bound oxygenase mpaB' from Penicillium brevicompactum.